The primary structure comprises 740 residues: UvrABC system protein B (740 aa).

Residues Met-1–Arg-36 form a disordered region. The segment covering Thr-8–Lys-33 has biased composition (basic and acidic residues). Positions Lys-56 to Arg-444 constitute a Helicase ATP-binding domain. Gly-69–Thr-76 is a binding site for ATP. The short motif at Tyr-122–Ile-145 is the Beta-hairpin element. The Helicase C-terminal domain occupies Gln-461–Val-627. One can recognise a UVR domain in the interval Ala-651–Gln-686. The segment at Glu-687 to His-740 is disordered. Over residues Thr-712–His-740 the composition is skewed to basic and acidic residues.

This sequence belongs to the UvrB family. As to quaternary structure, forms a heterotetramer with UvrA during the search for lesions. Interacts with UvrC in an incision complex.

The protein resides in the cytoplasm. Its function is as follows. The UvrABC repair system catalyzes the recognition and processing of DNA lesions. A damage recognition complex composed of 2 UvrA and 2 UvrB subunits scans DNA for abnormalities. Upon binding of the UvrA(2)B(2) complex to a putative damaged site, the DNA wraps around one UvrB monomer. DNA wrap is dependent on ATP binding by UvrB and probably causes local melting of the DNA helix, facilitating insertion of UvrB beta-hairpin between the DNA strands. Then UvrB probes one DNA strand for the presence of a lesion. If a lesion is found the UvrA subunits dissociate and the UvrB-DNA preincision complex is formed. This complex is subsequently bound by UvrC and the second UvrB is released. If no lesion is found, the DNA wraps around the other UvrB subunit that will check the other stand for damage. The sequence is that of UvrABC system protein B from Zymomonas mobilis subsp. mobilis (strain ATCC 31821 / ZM4 / CP4).